We begin with the raw amino-acid sequence, 329 residues long: Delta-aminolevulinic acid dehydratase (329 aa).

Lys202 serves as the catalytic Schiff-base intermediate with substrate. Residues Arg212 and Arg223 each coordinate 5-aminolevulinate. Glu239 provides a ligand contact to Mg(2+). Lys254 acts as the Schiff-base intermediate with substrate in catalysis. Positions 280 and 319 each coordinate 5-aminolevulinate.

This sequence belongs to the ALAD family. In terms of assembly, homooctamer.

It catalyses the reaction 2 5-aminolevulinate = porphobilinogen + 2 H2O + H(+). Its pathway is porphyrin-containing compound metabolism; protoporphyrin-IX biosynthesis; coproporphyrinogen-III from 5-aminolevulinate: step 1/4. Functionally, catalyzes an early step in the biosynthesis of tetrapyrroles. Binds two molecules of 5-aminolevulinate per subunit, each at a distinct site, and catalyzes their condensation to form porphobilinogen. This Mycobacterium tuberculosis (strain CDC 1551 / Oshkosh) protein is Delta-aminolevulinic acid dehydratase (hemB).